Reading from the N-terminus, the 359-residue chain is Type-1 angiotensin II receptor (359 aa).

The Extracellular portion of the chain corresponds to 1 to 25 (MVPNYSTEETVKRIHVDCPVSGRHS). Asn-4 carries an N-linked (GlcNAc...) asparagine glycan. Residue Asp-17 participates in angiotensin II binding. Cystine bridges form between Cys-18/Cys-274 and Cys-101/Cys-180. The chain crosses the membrane as a helical span at residues 26-55 (YIYIMVPTVYSIIFIIGIFGNSLVVIVIYC). Over 56–61 (YMKLKT) the chain is Cytoplasmic. A helical membrane pass occupies residues 62-89 (VASIFLLNLALADLCFLITLPLWAAYTA). The Extracellular segment spans residues 90 to 98 (MEYQWPFGN). The chain crosses the membrane as a helical span at residues 99–125 (CLCKLASAGISFNLYASVFLLTCLSID). Residues 126-141 (RYLAIVHPVKSRIRRT) are Cytoplasmic-facing. The helical transmembrane segment at 142–165 (MFVARVTCIVIWLLAGVASLPVII) threads the bilayer. The Extracellular segment spans residues 166–190 (HRNIFFAENLNMTVCGFRYDNNNTT). Residue Arg-167 coordinates angiotensin II. Residue Asn-176 is glycosylated (N-linked (GlcNAc...) asparagine). 2 residues coordinate angiotensin II: Phe-182 and Tyr-184. N-linked (GlcNAc...) asparagine glycosylation is found at Asn-187 and Asn-188. A helical transmembrane segment spans residues 191–216 (LRVGLGLSKNLLGFLIPFLIILTSYT). Position 199 (Lys-199) interacts with angiotensin II. At 217 to 239 (LIWKTLKKAYQIQRNKTRNDDIF) the chain is on the cytoplasmic side. The chain crosses the membrane as a helical span at residues 240-268 (KMIVAIVFFFFFSWIPHQVFTFLDVLIQL). The Extracellular segment spans residues 269–278 (HVITDCKITD). The helical transmembrane segment at 279–304 (IVDTAMPFTICIAYFNNCLNPFFYVF) threads the bilayer. At 305–359 (FGKNFKKYFLQLIKYIPPNVSTHPSLTTKMSSLSYRPPENIRLPTKKTAGSFDAE) the chain is on the cytoplasmic side.

It belongs to the G-protein coupled receptor 1 family. C-terminal Ser or Thr residues may be phosphorylated.

The protein resides in the cell membrane. In terms of biological role, receptor for angiotensin II, a vasoconstricting peptide, which acts as a key regulator of blood pressure and sodium retention by the kidney. The activated receptor in turn couples to G-alpha proteins G(q) (GNAQ, GNA11, GNA14 or GNA15) and thus activates phospholipase C and increases the cytosolic Ca(2+) concentrations, which in turn triggers cellular responses such as stimulation of protein kinase C. This Gallus gallus (Chicken) protein is Type-1 angiotensin II receptor (AGTR1).